A 461-amino-acid chain; its full sequence is Steroidogenic factor 1 (461 aa).

The nuclear receptor DNA-binding region spans 10-85 (DELCPVCGDK…VGMRLEAVRA (76 aa)). The NR C4-type zinc finger occupies 13 to 33 (CPVCGDKVSGYHYGLLTCESC). 3 positions are modified to N6-acetyllysine: Lys34, Lys38, and Lys72. The NR C4-type zinc finger occupies 49–73 (CTESQSCKIDKTQRKRCPFCRFQKC). Residues 116–158 (NGFKLETGPPVGVPPPPPPPPDYMLPHGLHASEPKGLASGPPA) are disordered. Residue Lys119 forms a Glycyl lysine isopeptide (Lys-Gly) (interchain with G-Cter in SUMO) linkage. A compositionally biased stretch (pro residues) spans 126-138 (VGVPPPPPPPPDY). A Glycyl lysine isopeptide (Lys-Gly) (interchain with G-Cter in SUMO) cross-link involves residue Lys194. Residue Ser203 is modified to Phosphoserine; by CDK7. The region spanning 222 to 459 (GVPELILQLL…NLLIEMLQAK (238 aa)) is the NR LBD domain. The important for dimerization stretch occupies residues 230-461 (LLQLEPDEDQ…LIEMLQAKQT (232 aa)). A 1,2-diacyl-sn-glycero-3-phosphocholine is bound by residues Gly341, Tyr436, and Lys440.

This sequence belongs to the nuclear hormone receptor family. NR5 subfamily. In terms of assembly, binds DNA as a monomer. Part of a complex consisting of SFPQ, NONO and NR5A1. Interacts with NR0B2. Interacts with DGKQ and CDK7. Binds to and activated by HIPK3. Post-translationally, may be regulated by phosphorylation and dephosphorylation. Acetylation stimulates the transcriptional activity. In terms of processing, sumoylation reduces CDK7-mediated phosphorylation on Ser-203. Post-translationally, phosphorylated on Ser-203 by CDK7. This phosphorylation promotes transcriptional activity. In terms of tissue distribution, adrenal, ovary, testis, placenta, adipocyte, and brain.

It localises to the nucleus. In terms of biological role, transcriptional activator. Seems to be essential for sexual differentiation and formation of the primary steroidogenic tissues. Binds to the Ad4 site found in the promoter region of steroidogenic P450 genes such as CYP11A, CYP11B and CYP21B. Also regulates the AMH/Muellerian inhibiting substance gene as well as the AHCH and STAR genes. 5'-YCAAGGYC-3' and 5'-RRAGGTCA-3' are the consensus sequences for the recognition by NR5A1. The SFPQ-NONO-NR5A1 complex binds to the CYP17 promoter and regulates basal and cAMP-dependent transcriptional activity. Binds phospholipids with a phosphatidylinositol (PI) headgroup, in particular PI(3,4)P2 and PI(3,4,5)P3. Activated by the phosphorylation of NR5A1 by HIPK3 leading to increased steroidogenic gene expression upon cAMP signaling pathway stimulation. The chain is Steroidogenic factor 1 (NR5A1) from Bos taurus (Bovine).